We begin with the raw amino-acid sequence, 163 residues long: Nucleotide-binding protein BLi01194 (163 aa).

Belongs to the YajQ family.

Nucleotide-binding protein. The chain is Nucleotide-binding protein BLi01194 from Bacillus licheniformis (strain ATCC 14580 / DSM 13 / JCM 2505 / CCUG 7422 / NBRC 12200 / NCIMB 9375 / NCTC 10341 / NRRL NRS-1264 / Gibson 46).